A 1183-amino-acid chain; its full sequence is DNA-directed RNA polymerase subunit beta (1183 aa).

This sequence belongs to the RNA polymerase beta chain family. In terms of assembly, the RNAP catalytic core consists of 2 alpha, 1 beta, 1 beta' and 1 omega subunit. When a sigma factor is associated with the core the holoenzyme is formed, which can initiate transcription.

The catalysed reaction is RNA(n) + a ribonucleoside 5'-triphosphate = RNA(n+1) + diphosphate. Its function is as follows. DNA-dependent RNA polymerase catalyzes the transcription of DNA into RNA using the four ribonucleoside triphosphates as substrates. The sequence is that of DNA-directed RNA polymerase subunit beta from Staphylococcus aureus (strain Mu50 / ATCC 700699).